The following is a 317-amino-acid chain: Acetyl-coenzyme A carboxylase carboxyl transferase subunit alpha (317 aa).

One can recognise a CoA carboxyltransferase C-terminal domain in the interval 40 to 294 (RLQHKSQELT…KQQILADLAE (255 aa)).

It belongs to the AccA family. As to quaternary structure, acetyl-CoA carboxylase is a heterohexamer composed of biotin carboxyl carrier protein (AccB), biotin carboxylase (AccC) and two subunits each of ACCase subunit alpha (AccA) and ACCase subunit beta (AccD).

The protein localises to the cytoplasm. It carries out the reaction N(6)-carboxybiotinyl-L-lysyl-[protein] + acetyl-CoA = N(6)-biotinyl-L-lysyl-[protein] + malonyl-CoA. Its pathway is lipid metabolism; malonyl-CoA biosynthesis; malonyl-CoA from acetyl-CoA: step 1/1. In terms of biological role, component of the acetyl coenzyme A carboxylase (ACC) complex. First, biotin carboxylase catalyzes the carboxylation of biotin on its carrier protein (BCCP) and then the CO(2) group is transferred by the carboxyltransferase to acetyl-CoA to form malonyl-CoA. In Haemophilus ducreyi (strain 35000HP / ATCC 700724), this protein is Acetyl-coenzyme A carboxylase carboxyl transferase subunit alpha.